The primary structure comprises 428 residues: Histidinol dehydrogenase (428 aa).

Positions 127, 185, and 208 each coordinate NAD(+). Substrate is bound by residues serine 232, glutamine 254, and histidine 257. Zn(2+)-binding residues include glutamine 254 and histidine 257. Active-site proton acceptor residues include glutamate 321 and histidine 322. Histidine 322, aspartate 355, glutamate 409, and histidine 414 together coordinate substrate. Residue aspartate 355 coordinates Zn(2+). Histidine 414 lines the Zn(2+) pocket.

It belongs to the histidinol dehydrogenase family. Requires Zn(2+) as cofactor.

It carries out the reaction L-histidinol + 2 NAD(+) + H2O = L-histidine + 2 NADH + 3 H(+). Its pathway is amino-acid biosynthesis; L-histidine biosynthesis; L-histidine from 5-phospho-alpha-D-ribose 1-diphosphate: step 9/9. Its function is as follows. Catalyzes the sequential NAD-dependent oxidations of L-histidinol to L-histidinaldehyde and then to L-histidine. This Pasteurella multocida (strain Pm70) protein is Histidinol dehydrogenase.